Here is a 495-residue protein sequence, read N- to C-terminus: Cobyric acid synthase (495 aa).

The 170-residue stretch at 258 to 427 folds into the GATase cobBQ-type domain; sequence GLRVAAVRLP…WHGLFDNDGF (170 aa). The active-site Nucleophile is C339. The active site involves H419.

The protein belongs to the CobB/CobQ family. CobQ subfamily.

The protein operates within cofactor biosynthesis; adenosylcobalamin biosynthesis. Its function is as follows. Catalyzes amidations at positions B, D, E, and G on adenosylcobyrinic A,C-diamide. NH(2) groups are provided by glutamine, and one molecule of ATP is hydrogenolyzed for each amidation. This is Cobyric acid synthase from Mycobacterium sp. (strain KMS).